Reading from the N-terminus, the 72-residue chain is Translation initiation factor IF-1 (72 aa).

The S1-like domain maps to 1-72 (MAKEELLEMR…TKGRITYRFK (72 aa)).

It belongs to the IF-1 family. Component of the 30S ribosomal translation pre-initiation complex which assembles on the 30S ribosome in the order IF-2 and IF-3, IF-1 and N-formylmethionyl-tRNA(fMet); mRNA recruitment can occur at any time during PIC assembly.

The protein localises to the cytoplasm. One of the essential components for the initiation of protein synthesis. Stabilizes the binding of IF-2 and IF-3 on the 30S subunit to which N-formylmethionyl-tRNA(fMet) subsequently binds. Helps modulate mRNA selection, yielding the 30S pre-initiation complex (PIC). Upon addition of the 50S ribosomal subunit IF-1, IF-2 and IF-3 are released leaving the mature 70S translation initiation complex. The polypeptide is Translation initiation factor IF-1 (Sphingopyxis alaskensis (strain DSM 13593 / LMG 18877 / RB2256) (Sphingomonas alaskensis)).